The following is a 60-amino-acid chain: Cytotoxin 2 (60 aa).

Intrachain disulfides connect Cys-3–Cys-21, Cys-14–Cys-38, Cys-42–Cys-53, and Cys-54–Cys-59.

It belongs to the three-finger toxin family. Short-chain subfamily. Type IA cytotoxin sub-subfamily. In terms of assembly, monomer, or heterodimer with alpha-cobratoxin (AC P01391); disulfide-linked. Expressed by the venom gland.

It localises to the secreted. The protein resides in the target cell membrane. Functionally, monomer: shows cytolytic activity. In terms of biological role, heterodimer: has no cytolytic activity, but retains most of the alpha-cobratoxin capacity to compete with alpha-bungarotoxin for binding to Torpedo and alpha-7/CHRNA7 nicotinic acetylcholine receptors (nAChRs) as well as to Lymnea stagnalis acetylcholine-binding protein. In Naja kaouthia (Monocled cobra), this protein is Cytotoxin 2.